The following is a 254-amino-acid chain: 3-deoxy-manno-octulosonate cytidylyltransferase (254 aa).

This sequence belongs to the KdsB family.

Its subcellular location is the cytoplasm. It carries out the reaction 3-deoxy-alpha-D-manno-oct-2-ulosonate + CTP = CMP-3-deoxy-beta-D-manno-octulosonate + diphosphate. It participates in nucleotide-sugar biosynthesis; CMP-3-deoxy-D-manno-octulosonate biosynthesis; CMP-3-deoxy-D-manno-octulosonate from 3-deoxy-D-manno-octulosonate and CTP: step 1/1. It functions in the pathway bacterial outer membrane biogenesis; lipopolysaccharide biosynthesis. Activates KDO (a required 8-carbon sugar) for incorporation into bacterial lipopolysaccharide in Gram-negative bacteria. The protein is 3-deoxy-manno-octulosonate cytidylyltransferase of Polynucleobacter asymbioticus (strain DSM 18221 / CIP 109841 / QLW-P1DMWA-1) (Polynucleobacter necessarius subsp. asymbioticus).